A 1192-amino-acid polypeptide reads, in one-letter code: Protein FAM83H (1192 aa).

Disordered regions lie at residues 435–542 (EGMG…VKQG), 557–661 (DGGE…LAEP), 695–720 (SKLE…ESEP), 737–1082 (LSRE…SNII), and 1094–1145 (ILEQ…ERDN). Residues 437–447 (MGHDDRGHYDR) are compositionally biased toward basic and acidic residues. Polar residues-rich tracts occupy residues 523 to 538 (QLFS…QDPS) and 629 to 652 (SDLG…ASST). Basic and acidic residues-rich tracts occupy residues 737-759 (LSRE…KHAS) and 768-789 (DTKE…EENK). Over residues 790-810 (VTQPTVPSASQQITSSLNMND) the composition is skewed to polar residues. Basic and acidic residues predominate over residues 820-834 (DQQEKRKTSKLELDL). The span at 861-878 (TSEQSTVKAQEPTVSQTD) shows a compositional bias: polar residues. Composition is skewed to basic and acidic residues over residues 880 to 892 (VPHR…KPKP) and 914 to 925 (APKKEPVKEPTK). The span at 926-946 (SLKPFPSPKFLKPFKSSQSSS) shows a compositional bias: low complexity. Positions 994–1005 (ESKDTKALDFLK) are enriched in basic and acidic residues. The span at 1068-1082 (KPTTSRYQSSTSNII) shows a compositional bias: polar residues. The segment covering 1107 to 1122 (QQNEESGKGDGGKDDV) has biased composition (basic and acidic residues).

It belongs to the FAM83 family.

The protein localises to the cytoplasm. The protein resides in the cytoskeleton. Its function is as follows. May play a role in keratin cytoskeleton disassembly. This Danio rerio (Zebrafish) protein is Protein FAM83H.